Reading from the N-terminus, the 355-residue chain is Uroporphyrinogen decarboxylase (355 aa).

Substrate contacts are provided by residues 27-31 (RQAGR), Asp-78, Tyr-155, Ser-210, and His-328.

Belongs to the uroporphyrinogen decarboxylase family. As to quaternary structure, homodimer.

Its subcellular location is the cytoplasm. It catalyses the reaction uroporphyrinogen III + 4 H(+) = coproporphyrinogen III + 4 CO2. It functions in the pathway porphyrin-containing compound metabolism; protoporphyrin-IX biosynthesis; coproporphyrinogen-III from 5-aminolevulinate: step 4/4. In terms of biological role, catalyzes the decarboxylation of four acetate groups of uroporphyrinogen-III to yield coproporphyrinogen-III. The polypeptide is Uroporphyrinogen decarboxylase (Pseudomonas aeruginosa (strain LESB58)).